Consider the following 573-residue polypeptide: Chaperone Ric-8 (573 aa).

Residues Glu308 to Glu324 show a composition bias toward basic and acidic residues. Disordered regions lie at residues Glu308–Ala329 and Gly473–Gln493. A phosphoserine mark is found at Ser477, Ser478, Ser480, and Ser483.

The protein belongs to the synembryn family. In terms of assembly, interacts with GDP-bound G(i)-alpha protein G-i-alpha-65A. Does not interact with G-alpha proteins when they are in complex with subunits beta and gamma. Interacts with Frq2 in a Ca(2+)-independent manner but does not interact with Frq1. In terms of tissue distribution, expression in the embryo is primarily neural.

It localises to the cytoplasm. The protein localises to the cell cortex. It is found in the presynapse. Functionally, chaperone that specifically binds and folds some, but not all, nascent G alpha proteins prior to G protein heterotrimer formation, promoting their stability and activity. Also acts as a guanine nucleotide exchange factor (GEF) for G alpha proteins by stimulating exchange of bound GDP for free GTP. Plays a key role in asymmetric spindle positioning, a step for asymmetric cell division that generates cell diversity during development by activating G(i) alpha protein independently of G-protein coupled receptors. Required during gastrulation and sensory organ precursor (SOP) formation. Plays a role in positively regulating synapse number and neurotransmitter release. This is Chaperone Ric-8 (ric8a) from Drosophila melanogaster (Fruit fly).